The sequence spans 299 residues: Oxygen-dependent coproporphyrinogen-III oxidase (299 aa).

Position 92 (Ser92) interacts with substrate. Mn(2+) contacts are provided by His96 and His106. The active-site Proton donor is His106. 108-110 (NVR) is a substrate binding site. The Mn(2+) site is built by His145 and His175. Residues 240–275 (YVEFNLVWDRGTLFGLQTGGRTESILMSMPPLVRWE) are important for dimerization. 258 to 260 (GGR) is a substrate binding site.

This sequence belongs to the aerobic coproporphyrinogen-III oxidase family. Homodimer. Mn(2+) is required as a cofactor.

It localises to the cytoplasm. The catalysed reaction is coproporphyrinogen III + O2 + 2 H(+) = protoporphyrinogen IX + 2 CO2 + 2 H2O. The protein operates within porphyrin-containing compound metabolism; protoporphyrin-IX biosynthesis; protoporphyrinogen-IX from coproporphyrinogen-III (O2 route): step 1/1. Functionally, involved in the heme biosynthesis. Catalyzes the aerobic oxidative decarboxylation of propionate groups of rings A and B of coproporphyrinogen-III to yield the vinyl groups in protoporphyrinogen-IX. The chain is Oxygen-dependent coproporphyrinogen-III oxidase from Escherichia fergusonii (strain ATCC 35469 / DSM 13698 / CCUG 18766 / IAM 14443 / JCM 21226 / LMG 7866 / NBRC 102419 / NCTC 12128 / CDC 0568-73).